A 68-amino-acid polypeptide reads, in one-letter code: Large ribosomal subunit protein bL35 (68 aa).

Belongs to the bacterial ribosomal protein bL35 family.

This Onion yellows phytoplasma (strain OY-M) protein is Large ribosomal subunit protein bL35.